We begin with the raw amino-acid sequence, 295 residues long: Small ribosomal subunit protein uS2 (295 aa).

Residue Ser-2 is modified to N-acetylserine. Phosphoserine is present on Ser-43. Lys-52 carries the N6-acetyllysine modification. Positions 54–113 are interaction with PPP1R16B; it reads TWEKLLLAARAIVAIENPADVSVISSRNTGQRAVLKFAAATGATPIAGRFTPGTFTNQIQ. Lys-89 carries the post-translational modification N6-acetyllysine; alternate. Lys-89 is covalently cross-linked (Glycyl lysine isopeptide (Lys-Gly) (interchain with G-Cter in SUMO2); alternate). Thr-97 carries the phosphothreonine modification. 2 laminin-binding regions span residues 161 to 180 and 205 to 229; these read IPCN…MLAR and RDPE…EFQG. [DE]-W-[ST] repeat units lie at residues 230–232, 247–249, 266–268, 275–277, and 293–295; these read EWT, DWS, and EWS. Residues 242–295 are laminin-binding; sequence QPEVADWSEGVQVPSVPIQQFPTEDWSAQPATEDWSAAPTAQATEWVGATTEWS. Positions 266 to 295 are disordered; the sequence is DWSAQPATEDWSAAPTAQATEWVGATTEWS.

Belongs to the universal ribosomal protein uS2 family. Monomer (37LRP) and homodimer (67LR). Component of the small ribosomal subunit. Mature ribosomes consist of a small (40S) and a large (60S) subunit. The 40S subunit contains about 33 different proteins and 1 molecule of RNA (18S). The 60S subunit contains about 49 different proteins and 3 molecules of RNA (28S, 5.8S and 5S). Interacts with RPS21. Interacts with several laminins including at least LAMB1. Interacts with MDK. Interacts with PRNP. The mature dimeric form interacts with PPP1R16B (via its fourth ankyrin repeat). Interacts with PPP1CA only in the presence of PPP1R16B. Post-translationally, acylated. Acylation may be a prerequisite for conversion of the monomeric 37 kDa laminin receptor precursor (37LRP) to the mature dimeric 67 kDa laminin receptor (67LR), and may provide a mechanism for membrane association. In terms of processing, cleaved by stromelysin-3 (ST3) at the cell surface. Cleavage by stromelysin-3 may be a mechanism to alter cell-extracellular matrix interactions.

It localises to the cell membrane. It is found in the cytoplasm. The protein resides in the nucleus. Functionally, required for the assembly and/or stability of the 40S ribosomal subunit. Required for the processing of the 20S rRNA-precursor to mature 18S rRNA in a late step of the maturation of 40S ribosomal subunits. Also functions as a cell surface receptor for laminin. Plays a role in cell adhesion to the basement membrane and in the consequent activation of signaling transduction pathways. May play a role in cell fate determination and tissue morphogenesis. Also acts as a receptor for several other ligands, including the pathogenic prion protein, viruses, and bacteria. Acts as a PPP1R16B-dependent substrate of PPP1CA. Enables malignant tumor cells to penetrate laminin tissue and vessel barriers. Activates precursor thymic anti-OFA/iLRP specific cytotoxic T-cell. May induce CD8 T-suppressor cells secreting IL-10. The sequence is that of Small ribosomal subunit protein uS2 (Rpsa) from Mus musculus (Mouse).